Reading from the N-terminus, the 434-residue chain is MKVKYALLSAGALQLLVVGCGSSHHETHYGYATLSYADYWAGELGQSRDVLLAGNAEADRAGDLDAGMFDAVSRATHGHGAFRQQFQYAVEVLGEKVLSKQETEDSRGRKKWEYETDPSVTKMVRASASFQDLGEDGEIKFEAVEGAVALADRASSFMVDSEEYKITNVKVHGMKFVPVAVPHELKGIAKEKFHFVEDSRVTENTNGLKTMLTEDSFSARKVSSMESPHDLVVDTVGTGYHSRFGSDAEASVMLKRADGSELSHREFIDYVMNFNTVRYDYYGDDASYTNLMASYGTKHSADSWWKTGRVPRISCGINYGFDRFKGSGPGYYRLTLIANGYRDVVADVRFLPKYEGNIDIGLKGKVLTIGGADAETLMDAAVDVFADGQPKLVSDQAVSLGQNVLSADFTPGTEYTVEVRFKEFGSVRAKVVAQ.

A signal peptide spans 1–19 (MKVKYALLSAGALQLLVVG). Cys20 carries the N-palmitoyl cysteine lipid modification. Cys20 carries the S-diacylglycerol cysteine lipid modification.

In terms of assembly, probably a monomer; a non-lipidated construct (residues 22-434) is monomeric in solution but crystallizes as a homodimer. Requires Zn(2+) as cofactor. Post-translationally, the N-terminus is blocked. Present as a doublet of low abundance 48 kDa and high abundance 47 kDa proteins. The longer form is probably due to readthrough of the stop codon; the extra amino acids at the C-terminus would be X-Lys-Arg-Gly-Val-Leu-Ser-Arg-Val-Ser, a peptide antibody against this sequence detects only the 48 kDa form.

The protein localises to the cell inner membrane. A possible D,D-carboxypeptidase, that releases amino acids sequentially from a proteins C-terminus. Has zinc-dependent carboxypeptidase activity on synthetic depsipeptide substrates. May serve to decrease cross-linking of peptidoglycan, promoting the highly sinusous motility of this spirochaete. Overexpression of the whole protein in E.coli leads to aberrant cell morphology and extrusion of the cytoplasm, while overexpression of a construct with the first 62 resides of the protein fused to PhoA does have this effect, suggesting the whole protein, not the lipoprotein moiety, is toxic. Binds penicillin. Penicillin binding is covalent, does not require lipidation, and is zinc-dependent. While this protein has beta-lactamase activity in vitro, that is probably not its role in vivo, as T.pallidum is very sensitive to penicillin antibiotics. Functionally, a pathogen-specific membrane antigen. Most abundant of the membrane lipoproteins, only found in pathogenic treponemes, suggesting that it is an important structural moiety in the cell envelope of virulent treponemal subspecies. A lipopeptide corresponding to the first 6 mature residues induces host (human and mouse) cytokine release by monocyte cell lines via TLR2 and CD14; nonlipidated protein does not stimulate host cells. Stimulates host (human) dendritic cell maturation to become MHC class II-positive antigen presenting cells via TLR2, which depends on lipidation; nonlipidated protein does not stimulate maturation. This Treponema pallidum (strain Nichols) protein is Putative DD-carboxypeptidase TP_0574.